Consider the following 360-residue polypeptide: UDP-3-O-acylglucosamine N-acyltransferase (360 aa).

The Proton acceptor role is filled by histidine 248.

It belongs to the transferase hexapeptide repeat family. LpxD subfamily. In terms of assembly, homotrimer.

The enzyme catalyses a UDP-3-O-[(3R)-3-hydroxyacyl]-alpha-D-glucosamine + a (3R)-hydroxyacyl-[ACP] = a UDP-2-N,3-O-bis[(3R)-3-hydroxyacyl]-alpha-D-glucosamine + holo-[ACP] + H(+). It functions in the pathway bacterial outer membrane biogenesis; LPS lipid A biosynthesis. Catalyzes the N-acylation of UDP-3-O-acylglucosamine using 3-hydroxyacyl-ACP as the acyl donor. Is involved in the biosynthesis of lipid A, a phosphorylated glycolipid that anchors the lipopolysaccharide to the outer membrane of the cell. The polypeptide is UDP-3-O-acylglucosamine N-acyltransferase (Chlamydia pneumoniae (Chlamydophila pneumoniae)).